Consider the following 103-residue polypeptide: Large ribosomal subunit protein bL21 (103 aa).

Belongs to the bacterial ribosomal protein bL21 family. Part of the 50S ribosomal subunit. Contacts protein L20.

Its function is as follows. This protein binds to 23S rRNA in the presence of protein L20. This chain is Large ribosomal subunit protein bL21, found in Acidovorax sp. (strain JS42).